The following is a 208-amino-acid chain: Pectinesterase inhibitor 6 (208 aa).

An N-terminal signal peptide occupies residues 1-30 (MTSSSSSPITFTLLLLLSLLVALNPNPSLA). Residues Cys-53 and Cys-62 are joined by a disulfide bond. Asn-54 and Asn-75 each carry an N-linked (GlcNAc...) asparagine glycan. Cys-118 and Cys-165 are disulfide-bonded.

It belongs to the PMEI family.

The protein resides in the secreted. It is found in the extracellular space. Its subcellular location is the apoplast. In terms of biological role, pectin methylesterase (PME) inhibitor that targets PME from seeds and modulates PME activity and pectin methylesterification during seed germination. Promotes mucilage release by limiting methylesterification of homogalacturonan in seed coat epidermal cells. In Arabidopsis thaliana (Mouse-ear cress), this protein is Pectinesterase inhibitor 6.